The following is a 492-amino-acid chain: Probable endopolygalacturonase D (492 aa).

An N-terminal signal peptide occupies residues 1-16 (MKRSALILSFLPLVFG). Cys-151 and Cys-166 are oxidised to a cystine. PbH1 repeat units follow at residues 216–238 (GTSV…AYWD), 258–280 (MYNS…EIES), 281–319 (TEHL…DIKE), and 320–341 (SSYF…AVTS). Asn-292 is a glycosylation site (N-linked (GlcNAc...) asparagine). The active-site Proton donor is the Asp-334. The cysteines at positions 336 and 352 are disulfide-linked. Residue His-356 is part of the active site. PbH1 repeat units lie at residues 371–392 (VNGV…RIKT), 400–422 (VYNI…DVQQ), and 434–478 (TNGV…SITG). N-linked (GlcNAc...) asparagine glycans are attached at residues Asn-407 and Asn-441. 2 disulfide bridges follow: Cys-461–Cys-466 and Cys-484–Cys-491.

The protein belongs to the glycosyl hydrolase 28 family.

Its subcellular location is the secreted. It catalyses the reaction (1,4-alpha-D-galacturonosyl)n+m + H2O = (1,4-alpha-D-galacturonosyl)n + (1,4-alpha-D-galacturonosyl)m.. Involved in maceration and soft-rotting of plant tissue. Hydrolyzes the 1,4-alpha glycosidic bonds of de-esterified pectate in the smooth region of the plant cell wall. The protein is Probable endopolygalacturonase D (pgaD) of Aspergillus oryzae (strain ATCC 42149 / RIB 40) (Yellow koji mold).